A 540-amino-acid chain; its full sequence is 2,3-bisphosphoglycerate-independent phosphoglycerate mutase (540 aa).

Mn(2+) is bound by residues Asp24 and Ser74. Catalysis depends on Ser74, which acts as the Phosphoserine intermediate. Residues His135, 165-166, Arg197, Arg203, 268-271, and Lys341 each bind substrate; these read RD and RPDR. Residues Asp408, His412, Asp449, His450, and His467 each coordinate Mn(2+).

The protein belongs to the BPG-independent phosphoglycerate mutase family. In terms of assembly, monomer. It depends on Mn(2+) as a cofactor.

It carries out the reaction (2R)-2-phosphoglycerate = (2R)-3-phosphoglycerate. It participates in carbohydrate degradation; glycolysis; pyruvate from D-glyceraldehyde 3-phosphate: step 3/5. Functionally, catalyzes the interconversion of 2-phosphoglycerate and 3-phosphoglycerate. This is 2,3-bisphosphoglycerate-independent phosphoglycerate mutase from Prochlorococcus marinus (strain SARG / CCMP1375 / SS120).